The chain runs to 948 residues: Bifunctional glutamine synthetase adenylyltransferase/adenylyl-removing enzyme (948 aa).

The segment at 1–447 (MLTPDNKLMS…EFQQVVGAES (447 aa)) is adenylyl removase. Residues 453–948 (EQGLQVLWQD…NCWNHLLEDD (496 aa)) form an adenylyl transferase region.

The protein belongs to the GlnE family. The cofactor is Mg(2+).

It catalyses the reaction [glutamine synthetase]-O(4)-(5'-adenylyl)-L-tyrosine + phosphate = [glutamine synthetase]-L-tyrosine + ADP. The enzyme catalyses [glutamine synthetase]-L-tyrosine + ATP = [glutamine synthetase]-O(4)-(5'-adenylyl)-L-tyrosine + diphosphate. Its function is as follows. Involved in the regulation of glutamine synthetase GlnA, a key enzyme in the process to assimilate ammonia. When cellular nitrogen levels are high, the C-terminal adenylyl transferase (AT) inactivates GlnA by covalent transfer of an adenylyl group from ATP to specific tyrosine residue of GlnA, thus reducing its activity. Conversely, when nitrogen levels are low, the N-terminal adenylyl removase (AR) activates GlnA by removing the adenylyl group by phosphorolysis, increasing its activity. The regulatory region of GlnE binds the signal transduction protein PII (GlnB) which indicates the nitrogen status of the cell. The protein is Bifunctional glutamine synthetase adenylyltransferase/adenylyl-removing enzyme of Idiomarina loihiensis (strain ATCC BAA-735 / DSM 15497 / L2-TR).